A 229-amino-acid polypeptide reads, in one-letter code: Adapter protein MecA (229 aa).

Belongs to the MecA family. In terms of assembly, homodimer.

Functionally, enables the recognition and targeting of unfolded and aggregated proteins to the ClpC protease or to other proteins involved in proteolysis. The polypeptide is Adapter protein MecA (Latilactobacillus sakei subsp. sakei (strain 23K) (Lactobacillus sakei subsp. sakei)).